A 311-amino-acid polypeptide reads, in one-letter code: Malate dehydrogenase (311 aa).

NAD(+)-binding positions include 7 to 13 (GAAGGIG) and aspartate 34. Arginine 81 and arginine 87 together coordinate substrate. NAD(+) contacts are provided by residues asparagine 94 and 117-119 (ITN). Substrate-binding residues include asparagine 119 and arginine 153. The Proton acceptor role is filled by histidine 177. Methionine 227 lines the NAD(+) pocket.

The protein belongs to the LDH/MDH superfamily. MDH type 1 family. Homodimer.

The catalysed reaction is (S)-malate + NAD(+) = oxaloacetate + NADH + H(+). Catalyzes the reversible oxidation of malate to oxaloacetate. This Shewanella sediminis (strain HAW-EB3) protein is Malate dehydrogenase.